Reading from the N-terminus, the 297-residue chain is HTH-type transcriptional regulator ArgP (297 aa).

The HTH lysR-type domain occupies 4-60; the sequence is PDYRTLQALDAVIRERGFERAAQKLCITQSAVSQRIKQLENMFGQPLLVRTVPPRPT. A DNA-binding region (H-T-H motif) is located at residues 21-40; that stretch reads FERAAQKLCITQSAVSQRIK.

The protein belongs to the LysR transcriptional regulatory family. As to quaternary structure, homodimer.

Controls the transcription of genes involved in arginine and lysine metabolism. This chain is HTH-type transcriptional regulator ArgP, found in Escherichia coli O7:K1 (strain IAI39 / ExPEC).